A 122-amino-acid polypeptide reads, in one-letter code: Large ribosomal subunit protein uL14 (122 aa).

Belongs to the universal ribosomal protein uL14 family. Part of the 50S ribosomal subunit. Forms a cluster with proteins L3 and L19. In the 70S ribosome, L14 and L19 interact and together make contacts with the 16S rRNA in bridges B5 and B8.

Functionally, binds to 23S rRNA. Forms part of two intersubunit bridges in the 70S ribosome. The polypeptide is Large ribosomal subunit protein uL14 (Streptococcus pyogenes serotype M2 (strain MGAS10270)).